Consider the following 416-residue polypeptide: Serine hydroxymethyltransferase (416 aa).

(6S)-5,6,7,8-tetrahydrofolate contacts are provided by residues Leu-121 and 125-127 (GHL). Residue Lys-230 is modified to N6-(pyridoxal phosphate)lysine.

The protein belongs to the SHMT family. As to quaternary structure, homodimer. Requires pyridoxal 5'-phosphate as cofactor.

The protein localises to the cytoplasm. The catalysed reaction is (6R)-5,10-methylene-5,6,7,8-tetrahydrofolate + glycine + H2O = (6S)-5,6,7,8-tetrahydrofolate + L-serine. The protein operates within one-carbon metabolism; tetrahydrofolate interconversion. Its pathway is amino-acid biosynthesis; glycine biosynthesis; glycine from L-serine: step 1/1. Its function is as follows. Catalyzes the reversible interconversion of serine and glycine with tetrahydrofolate (THF) serving as the one-carbon carrier. This reaction serves as the major source of one-carbon groups required for the biosynthesis of purines, thymidylate, methionine, and other important biomolecules. Also exhibits THF-independent aldolase activity toward beta-hydroxyamino acids, producing glycine and aldehydes, via a retro-aldol mechanism. The polypeptide is Serine hydroxymethyltransferase (Nitrosospira multiformis (strain ATCC 25196 / NCIMB 11849 / C 71)).